Here is a 307-residue protein sequence, read N- to C-terminus: Bifunctional protein FolD (307 aa).

NADP(+) contacts are provided by residues 170–172 (GRS), serine 195, and isoleucine 236.

The protein belongs to the tetrahydrofolate dehydrogenase/cyclohydrolase family. In terms of assembly, homodimer.

The enzyme catalyses (6R)-5,10-methylene-5,6,7,8-tetrahydrofolate + NADP(+) = (6R)-5,10-methenyltetrahydrofolate + NADPH. It carries out the reaction (6R)-5,10-methenyltetrahydrofolate + H2O = (6R)-10-formyltetrahydrofolate + H(+). It functions in the pathway one-carbon metabolism; tetrahydrofolate interconversion. Functionally, catalyzes the oxidation of 5,10-methylenetetrahydrofolate to 5,10-methenyltetrahydrofolate and then the hydrolysis of 5,10-methenyltetrahydrofolate to 10-formyltetrahydrofolate. The protein is Bifunctional protein FolD of Sinorhizobium fredii (strain NBRC 101917 / NGR234).